The primary structure comprises 468 residues: 6-phosphogluconate dehydrogenase, decarboxylating (468 aa).

NADP(+) contacts are provided by residues 10 to 15, 33 to 35, 74 to 76, and Asn102; these read GMAVMG, NRS, and VKA. Substrate is bound by residues Asn102 and 128–130; that span reads SGG. The Proton acceptor role is filled by Lys183. 186 to 187 contributes to the substrate binding site; it reads HN. The Proton donor role is filled by Glu190. Substrate-binding residues include Tyr191, Lys260, Arg287, Arg445, and His451.

Belongs to the 6-phosphogluconate dehydrogenase family. Homodimer.

The catalysed reaction is 6-phospho-D-gluconate + NADP(+) = D-ribulose 5-phosphate + CO2 + NADPH. The protein operates within carbohydrate degradation; pentose phosphate pathway; D-ribulose 5-phosphate from D-glucose 6-phosphate (oxidative stage): step 3/3. Functionally, catalyzes the oxidative decarboxylation of 6-phosphogluconate to ribulose 5-phosphate and CO(2), with concomitant reduction of NADP to NADPH. This is 6-phosphogluconate dehydrogenase, decarboxylating (gnd) from Shigella flexneri.